Consider the following 174-residue polypeptide: Endoribonuclease YbeY (174 aa).

Residues histidine 124, histidine 128, and histidine 134 each coordinate Zn(2+).

Belongs to the endoribonuclease YbeY family. Zn(2+) serves as cofactor.

Its subcellular location is the cytoplasm. Its function is as follows. Single strand-specific metallo-endoribonuclease involved in late-stage 70S ribosome quality control and in maturation of the 3' terminus of the 16S rRNA. In Synechococcus elongatus (strain ATCC 33912 / PCC 7942 / FACHB-805) (Anacystis nidulans R2), this protein is Endoribonuclease YbeY.